The following is a 239-amino-acid chain: Alpha-acetolactate decarboxylase (239 aa).

This sequence belongs to the alpha-acetolactate decarboxylase family.

The enzyme catalyses (2S)-2-acetolactate + H(+) = (R)-acetoin + CO2. Its pathway is polyol metabolism; (R,R)-butane-2,3-diol biosynthesis; (R,R)-butane-2,3-diol from pyruvate: step 2/3. The enzyme is active only in the presence of branched-chain amino acids. Valine results in much higher activation than leucine or isoleucine. In terms of biological role, converts acetolactate into acetoin. Regulates leucine and valine biosynthesis by diverting the flux of alpha-acetolactate towards acetoin when the branched-chain amino acids are present in high concentration. The sequence is that of Alpha-acetolactate decarboxylase (aldC) from Streptococcus thermophilus.